The primary structure comprises 93 residues: Small ribosomal subunit protein uS19 (93 aa).

The protein belongs to the universal ribosomal protein uS19 family.

Its function is as follows. Protein S19 forms a complex with S13 that binds strongly to the 16S ribosomal RNA. The chain is Small ribosomal subunit protein uS19 from Campylobacter hominis (strain ATCC BAA-381 / DSM 21671 / CCUG 45161 / LMG 19568 / NCTC 13146 / CH001A).